A 338-amino-acid chain; its full sequence is Nucleoid-associated protein PA14_59050 (338 aa).

This sequence belongs to the YejK family.

The protein localises to the cytoplasm. It localises to the nucleoid. The sequence is that of Nucleoid-associated protein PA14_59050 from Pseudomonas aeruginosa (strain UCBPP-PA14).